Reading from the N-terminus, the 274-residue chain is Tyrosinase (274 aa).

Cu cation is bound by residues H38, H54, H63, H190, H194, and H216.

It belongs to the tyrosinase family. It depends on Cu(2+) as a cofactor.

The enzyme catalyses 2 L-dopa + O2 = 2 L-dopaquinone + 2 H2O. It carries out the reaction L-tyrosine + O2 = L-dopaquinone + H2O. In terms of biological role, this is a copper-containing oxidase that functions in the formation of pigments such as melanins and other polyphenolic compounds. The protein is Tyrosinase (melC2) of Streptomyces glaucescens.